Here is a 498-residue protein sequence, read N- to C-terminus: MEKYILSIDQGTTSSRAILFNQKGEIAGVAQREFKQYFPQSGWVEHDANEIWTSVLAVMTEVINENDVRADQIAGIGITNQRETTVVWDKHTGRPIYHAIVWQSRQTQSICSELKQQGYEQTFRDKTGLLLDPYFAGTKVKWILDNVEGAREKAENGDLLFGTIDTWLVWKLSGKAAHITDYSNASRTLMFNIHDLEWDDELLELLTVPKNMLPEVKPSSEVYGKTIDYHFYGQEVPIAGVAGDQQAALFGQACFERGDVKNTYGTGGFMLMNTGDKAVKSESGLLTTIAYGIDGKVNYALEGSIFVSGSAIQWLRDGLRMINSAPQSESYATRVDSTEGVYVVPAFVGLGTPYWDSEARGAIFGLSRGTEKEHFIRATLESLCYQTRDVMEAMSKDSGIDVQSLRVDGGAVKNNFIMQFQADIVNTSVERPEIQETTALGAAFLAGLAVGFWESKDDIAKNWKLEEKFDPKMDEGEREKLYRGWKKAVEATQVFKTE.

T12 is a binding site for ADP. Residues T12, T13, and S14 each contribute to the ATP site. Residue T12 participates in sn-glycerol 3-phosphate binding. Residue R16 coordinates ADP. Sn-glycerol 3-phosphate is bound by residues R82, E83, and Y134. Positions 82, 83, and 134 each coordinate glycerol. At H230 the chain carries Phosphohistidine; by HPr. A sn-glycerol 3-phosphate-binding site is contributed by D244. 2 residues coordinate glycerol: D244 and Q245. ADP is bound by residues T266 and G309. ATP-binding residues include T266, G309, Q313, and G410. Residues G410 and N414 each coordinate ADP.

The protein belongs to the FGGY kinase family. Homotetramer and homodimer (in equilibrium). Post-translationally, the phosphoenolpyruvate-dependent sugar phosphotransferase system (PTS), including enzyme I, and histidine-containing protein (HPr) are required for the phosphorylation, which leads to the activation of the enzyme.

It carries out the reaction glycerol + ATP = sn-glycerol 3-phosphate + ADP + H(+). The protein operates within polyol metabolism; glycerol degradation via glycerol kinase pathway; sn-glycerol 3-phosphate from glycerol: step 1/1. Activated by phosphorylation and inhibited by fructose 1,6-bisphosphate (FBP). In terms of biological role, key enzyme in the regulation of glycerol uptake and metabolism. Catalyzes the phosphorylation of glycerol to yield sn-glycerol 3-phosphate. This is Glycerol kinase from Staphylococcus aureus (strain MW2).